The primary structure comprises 358 residues: Homoserine O-succinyltransferase (358 aa).

The Acyl-thioester intermediate role is filled by Cys146. Positions 167 and 196 each coordinate substrate. His239 acts as the Proton acceptor in catalysis. Residue Glu241 is part of the active site. Residue Arg253 coordinates substrate.

Belongs to the MetA family.

Its subcellular location is the cytoplasm. The enzyme catalyses L-homoserine + succinyl-CoA = O-succinyl-L-homoserine + CoA. It functions in the pathway amino-acid biosynthesis; L-methionine biosynthesis via de novo pathway; O-succinyl-L-homoserine from L-homoserine: step 1/1. In terms of biological role, transfers a succinyl group from succinyl-CoA to L-homoserine, forming succinyl-L-homoserine. The chain is Homoserine O-succinyltransferase from Nitrosococcus oceani (strain ATCC 19707 / BCRC 17464 / JCM 30415 / NCIMB 11848 / C-107).